We begin with the raw amino-acid sequence, 130 residues long: MYSFEQAITQLFQQLSLSIPDTIEPVIGVKVGEFACHITEHPVGQILMFTLPSLDNNDEKETLLSHNIFSQDILKPILSWDEVGGHPVLWNRQPLNSLDNNSLYTQLEMLVQGAERLQTSSLISPPRSFS.

In terms of biological role, positive regulator of YopE. This is YopE regulator (yerA) from Yersinia pestis.